The following is a 270-amino-acid chain: tRNA pseudouridine synthase A (270 aa).

Residue Asp60 is the Nucleophile of the active site. Tyr118 serves as a coordination point for substrate.

This sequence belongs to the tRNA pseudouridine synthase TruA family. Homodimer.

It carries out the reaction uridine(38/39/40) in tRNA = pseudouridine(38/39/40) in tRNA. Its function is as follows. Formation of pseudouridine at positions 38, 39 and 40 in the anticodon stem and loop of transfer RNAs. The sequence is that of tRNA pseudouridine synthase A from Salmonella typhimurium (strain LT2 / SGSC1412 / ATCC 700720).